The sequence spans 143 residues: Peptide methionine sulfoxide reductase MsrB (143 aa).

The MsrB domain occupies 5 to 127 (KEKRLKELNR…NSAALKFIPK (123 aa)). The Nucleophile role is filled by Cys116.

Belongs to the MsrB Met sulfoxide reductase family.

The enzyme catalyses L-methionyl-[protein] + [thioredoxin]-disulfide + H2O = L-methionyl-(R)-S-oxide-[protein] + [thioredoxin]-dithiol. The chain is Peptide methionine sulfoxide reductase MsrB from Bacillus pumilus (strain SAFR-032).